The sequence spans 1343 residues: Xanthine dehydrogenase (1343 aa).

A 2Fe-2S ferredoxin-type domain is found at 8–95 (SELVFFVNGK…GCAVTTVEGI (88 aa)). Positions 47, 52, 55, 77, 117, 120, 152, and 154 each coordinate [2Fe-2S] cluster. Positions 235-424 (FSSERVTWYR…LGIHFQKTTP (190 aa)) constitute an FAD-binding PCMH-type domain. Residues 263-270 (LVVGNTEV), F343, 353-357 (CLGGN), D366, L414, and K432 contribute to the FAD site. Residues Q780 and F811 each coordinate Mo-molybdopterin. Substrate-binding residues include E815 and R893. R925 contacts Mo-molybdopterin. Substrate is bound at residue F927. A1092 is a Mo-molybdopterin binding site. E1275 (proton acceptor) is an active-site residue.

The protein belongs to the xanthine dehydrogenase family. Homodimer. Requires FAD as cofactor. Mo-molybdopterin serves as cofactor. The cofactor is [2Fe-2S] cluster.

Its subcellular location is the peroxisome. It catalyses the reaction xanthine + NAD(+) + H2O = urate + NADH + H(+). It carries out the reaction hypoxanthine + NAD(+) + H2O = xanthine + NADH + H(+). Its function is as follows. Key enzyme in purine degradation. Catalyzes the oxidation of hypoxanthine to xanthine. Catalyzes the oxidation of xanthine to uric acid. The sequence is that of Xanthine dehydrogenase (ry) from Drosophila pseudoobscura pseudoobscura (Fruit fly).